Reading from the N-terminus, the 444-residue chain is tRNA-2-methylthio-N(6)-dimethylallyladenosine synthase (444 aa).

One can recognise an MTTase N-terminal domain in the interval 3-117 (RGLYIESYGC…LPELIMKVKR (115 aa)). Residues Cys-12, Cys-48, Cys-80, Cys-155, Cys-159, and Cys-162 each coordinate [4Fe-4S] cluster. One can recognise a Radical SAM core domain in the interval 141 to 374 (ANGGVSAYVS…LLTKQQLQFN (234 aa)). In terms of domain architecture, TRAM spans 375–441 (KSMEGRVMDV…QNSLEGTVLS (67 aa)).

It belongs to the methylthiotransferase family. MiaB subfamily. Monomer. [4Fe-4S] cluster serves as cofactor.

It localises to the cytoplasm. The enzyme catalyses N(6)-dimethylallyladenosine(37) in tRNA + (sulfur carrier)-SH + AH2 + 2 S-adenosyl-L-methionine = 2-methylsulfanyl-N(6)-dimethylallyladenosine(37) in tRNA + (sulfur carrier)-H + 5'-deoxyadenosine + L-methionine + A + S-adenosyl-L-homocysteine + 2 H(+). In terms of biological role, catalyzes the methylthiolation of N6-(dimethylallyl)adenosine (i(6)A), leading to the formation of 2-methylthio-N6-(dimethylallyl)adenosine (ms(2)i(6)A) at position 37 in tRNAs that read codons beginning with uridine. The polypeptide is tRNA-2-methylthio-N(6)-dimethylallyladenosine synthase (Anaplasma phagocytophilum (strain HZ)).